A 164-amino-acid chain; its full sequence is Cyclic pyranopterin monophosphate synthase (164 aa).

Residues L73–H75 and M111–E112 contribute to the substrate site. Residue D126 is part of the active site.

The protein belongs to the MoaC family. Homohexamer; trimer of dimers.

The enzyme catalyses (8S)-3',8-cyclo-7,8-dihydroguanosine 5'-triphosphate = cyclic pyranopterin phosphate + diphosphate. The protein operates within cofactor biosynthesis; molybdopterin biosynthesis. Catalyzes the conversion of (8S)-3',8-cyclo-7,8-dihydroguanosine 5'-triphosphate to cyclic pyranopterin monophosphate (cPMP). In Herpetosiphon aurantiacus (strain ATCC 23779 / DSM 785 / 114-95), this protein is Cyclic pyranopterin monophosphate synthase.